The sequence spans 500 residues: Probable cytosol aminopeptidase (500 aa).

Mn(2+) is bound by residues K261 and D266. K273 is an active-site residue. Mn(2+) contacts are provided by D284, D343, and E345. The active site involves R347.

This sequence belongs to the peptidase M17 family. Requires Mn(2+) as cofactor.

Its subcellular location is the cytoplasm. The enzyme catalyses Release of an N-terminal amino acid, Xaa-|-Yaa-, in which Xaa is preferably Leu, but may be other amino acids including Pro although not Arg or Lys, and Yaa may be Pro. Amino acid amides and methyl esters are also readily hydrolyzed, but rates on arylamides are exceedingly low.. It catalyses the reaction Release of an N-terminal amino acid, preferentially leucine, but not glutamic or aspartic acids.. Presumably involved in the processing and regular turnover of intracellular proteins. Catalyzes the removal of unsubstituted N-terminal amino acids from various peptides. The chain is Probable cytosol aminopeptidase from Wolbachia pipientis wMel.